The following is a 1915-amino-acid chain: Cysteine repeat modular protein 2 (1915 aa).

An N-terminal signal peptide occupies residues 1 to 23; sequence MKFKKELINILALIFVLKKNIFA. FU repeat units lie at residues 53–98, 104–151, 161–208, 210–263, and 267–315; these read LGLC…QTYV, SCIC…GYTQ, QLLC…LQYK, NGIC…GYVV, and TQRC…GNYQ. A glycan (N-linked (GlcNAc...) asparagine) is linked at Asn138. Asn274, Asn279, and Asn316 each carry an N-linked (GlcNAc...) asparagine glycan. FU repeat units lie at residues 317 to 362, 373 to 422, 427 to 492, 496 to 546, and 554 to 602; these read SSLC…GFYT, QPIC…QTYY, TRSC…GFYQ, NNSC…SQNN, and TQAC…GTYM. Asn409 is a glycosylation site (N-linked (GlcNAc...) asparagine). Asn496, Asn572, Asn603, and Asn621 each carry an N-linked (GlcNAc...) asparagine glycan. FU repeat units follow at residues 606 to 639, 640 to 686, and 690 to 739; these read TNQCSLCGFGCSSCTNGTFNSCISCLNGYYLQQN, YNVC…GFYV, and QQAC…NECL. Residue Asn742 is glycosylated (N-linked (GlcNAc...) asparagine). 2 FU repeats span residues 760–814 and 818–865; these read DGQC…GFYY and NKQC…GYYQ. N-linked (GlcNAc...) asparagine glycans are attached at residues Asn909, Asn930, Asn1051, Asn1085, and Asn1193. Positions 1184 to 1224 constitute an EGF-like domain; sequence VQIPCDSNINCSGNGKCLWSQDNYNEILCICNINYAGRYCE. Disulfide bonds link Cys1188–Cys1200, Cys1194–Cys1212, and Cys1214–Cys1223. Asn1250, Asn1297, Asn1519, Asn1546, Asn1554, Asn1580, and Asn1596 each carry an N-linked (GlcNAc...) asparagine glycan. The next 5 membrane-spanning stretches (helical) occupy residues 1599 to 1619, 1662 to 1682, 1704 to 1724, 1763 to 1783, and 1796 to 1816; these read LLYALLIYIIFITIFIVISII, YAQLIINLFLYNAIFVLVYSL, STSVACSIVTYYLTICMVNLF, GLVFMLQAGMGIPIIILILSF, and FASFVIDNILDIIILISFCFI. Asn1867 carries an N-linked (GlcNAc...) asparagine glycan.

The protein localises to the membrane. In terms of biological role, required for mucocyst secretion. The chain is Cysteine repeat modular protein 2 from Tetrahymena thermophila (strain SB210).